We begin with the raw amino-acid sequence, 268 residues long: Ribosomal RNA small subunit methyltransferase A (268 aa).

S-adenosyl-L-methionine contacts are provided by N17, L19, G44, E65, D89, and N110.

This sequence belongs to the class I-like SAM-binding methyltransferase superfamily. rRNA adenine N(6)-methyltransferase family. RsmA subfamily.

Its subcellular location is the cytoplasm. The catalysed reaction is adenosine(1518)/adenosine(1519) in 16S rRNA + 4 S-adenosyl-L-methionine = N(6)-dimethyladenosine(1518)/N(6)-dimethyladenosine(1519) in 16S rRNA + 4 S-adenosyl-L-homocysteine + 4 H(+). Functionally, specifically dimethylates two adjacent adenosines (A1518 and A1519) in the loop of a conserved hairpin near the 3'-end of 16S rRNA in the 30S particle. May play a critical role in biogenesis of 30S subunits. This is Ribosomal RNA small subunit methyltransferase A from Acidithiobacillus ferrooxidans (strain ATCC 53993 / BNL-5-31) (Leptospirillum ferrooxidans (ATCC 53993)).